We begin with the raw amino-acid sequence, 283 residues long: Pantothenate synthetase (283 aa).

30–37 (MGYFHEGH) lines the ATP pocket. The active-site Proton donor is H37. Residue Q61 coordinates (R)-pantoate. Q61 provides a ligand contact to beta-alanine. Residue 147 to 150 (GEKD) coordinates ATP. Q153 provides a ligand contact to (R)-pantoate. ATP is bound by residues V176 and 184–187 (MSSR).

Belongs to the pantothenate synthetase family. In terms of assembly, homodimer.

It localises to the cytoplasm. The catalysed reaction is (R)-pantoate + beta-alanine + ATP = (R)-pantothenate + AMP + diphosphate + H(+). The protein operates within cofactor biosynthesis; (R)-pantothenate biosynthesis; (R)-pantothenate from (R)-pantoate and beta-alanine: step 1/1. Its function is as follows. Catalyzes the condensation of pantoate with beta-alanine in an ATP-dependent reaction via a pantoyl-adenylate intermediate. This chain is Pantothenate synthetase, found in Syntrophobacter fumaroxidans (strain DSM 10017 / MPOB).